A 292-amino-acid polypeptide reads, in one-letter code: tRNA-cytidine(32) 2-sulfurtransferase (292 aa).

The PP-loop motif motif lies at S53–S58. [4Fe-4S] cluster is bound by residues C128, C131, and C219.

This sequence belongs to the TtcA family. As to quaternary structure, homodimer. The cofactor is Mg(2+). [4Fe-4S] cluster serves as cofactor.

Its subcellular location is the cytoplasm. The enzyme catalyses cytidine(32) in tRNA + S-sulfanyl-L-cysteinyl-[cysteine desulfurase] + AH2 + ATP = 2-thiocytidine(32) in tRNA + L-cysteinyl-[cysteine desulfurase] + A + AMP + diphosphate + H(+). It functions in the pathway tRNA modification. Catalyzes the ATP-dependent 2-thiolation of cytidine in position 32 of tRNA, to form 2-thiocytidine (s(2)C32). The sulfur atoms are provided by the cysteine/cysteine desulfurase (IscS) system. This is tRNA-cytidine(32) 2-sulfurtransferase from Cereibacter sphaeroides (strain ATCC 17029 / ATH 2.4.9) (Rhodobacter sphaeroides).